The chain runs to 430 residues: UPF0597 protein Clos_2050 (430 aa).

This sequence belongs to the UPF0597 family.

The polypeptide is UPF0597 protein Clos_2050 (Alkaliphilus oremlandii (strain OhILAs) (Clostridium oremlandii (strain OhILAs))).